We begin with the raw amino-acid sequence, 146 residues long: Large ribosomal subunit protein uL23m (146 aa).

The tract at residues 108–138 (PDLFPEKDPRSPEPLEEELPQQRQSSDLRCP) is disordered. The span at 111 to 120 (FPEKDPRSPE) shows a compositional bias: basic and acidic residues.

Belongs to the universal ribosomal protein uL23 family. In terms of assembly, component of the mitochondrial ribosome large subunit (39S) which comprises a 16S rRNA and about 50 distinct proteins.

It localises to the mitochondrion. The polypeptide is Large ribosomal subunit protein uL23m (Mrpl23) (Mus musculus (Mouse)).